Here is a 290-residue protein sequence, read N- to C-terminus: MLRVVLITGISGSGKSVALRLLEDAGFTCIDNLPVRFLAEFIANARDDAMERVAVAIDVRSPGELAELPDVITASRAMGTSLSVIFLDANTDTLVQRYSESRRRHPLTDRLARGGKTPSLAECIALERELMAPLRDQEHVIDTSDLTPGQLRAWIRDLIQADRPPLVLTFESFAYKRGVPSDADLMFDVRCLPNPYYDRTLRPLTGRDEPVATWLGGFDIVTQMIDDIAAFIRRWLPQYTQDTRNYLTVAIGCTGGQHRSVYVVEQLARRFSDHDPLLVRHRTQLPDDPA.

ATP is bound at residue 9-16 (GISGSGKS). 58–61 (DVRS) is a binding site for GTP.

It belongs to the RapZ-like family.

Displays ATPase and GTPase activities. The polypeptide is Nucleotide-binding protein BPP4038 (Bordetella parapertussis (strain 12822 / ATCC BAA-587 / NCTC 13253)).